The sequence spans 962 residues: Protein suppressor of underreplication (962 aa).

Disordered regions lie at residues 353–413 (EIVT…TRAA), 438–590 (TPTP…LSGS), 658–712 (NSSH…SPDL), 866–900 (QERTQPSNGNRNSIVASLRKSPKSPKHGARTTQAT), and 916–962 (QTSS…ELFK). A compositionally biased stretch (basic residues) spans 372 to 382 (PRTKSKKKCSK). The span at 386–395 (PCKEADLTDS) shows a compositional bias: basic and acidic residues. 2 stretches are compositionally biased toward polar residues: residues 438–448 (TPTPSGATTAI) and 480–489 (LTRSAESKIN). Over residues 524 to 552 (VKQESKAKAKPEQKKKIKTVDKPAQETPK) the composition is skewed to basic and acidic residues. A compositionally biased stretch (basic residues) spans 553 to 562 (RKPGRPRKCK). Polar residues predominate over residues 564–576 (LTETLGKSKTKPN). Positions 673–683 (RRTKALKRKRK) are enriched in basic residues. 2 stretches are compositionally biased toward polar residues: residues 703-712 (RSATNKSPDL) and 866-880 (QERTQPSNGNRNSIV). A compositionally biased stretch (basic residues) spans 885 to 894 (KSPKSPKHGA). The span at 916 to 944 (QTSSVESVSAPSTPVNPSTSAAACQTRTA) shows a compositional bias: polar residues. A compositionally biased stretch (basic residues) spans 953–962 (TKRKRLELFK).

The protein resides in the nucleus. The protein localises to the chromosome. Functionally, required for underreplication of DNA, which is found in many late replicating euchromatic regions of salivary gland polytene chromosomes. Controls chromatin organization in polytene chromosomes. The chain is Protein suppressor of underreplication (SuUR) from Drosophila erecta (Fruit fly).